The following is a 207-amino-acid chain: Large ribosomal subunit protein uL4 (207 aa).

The tract at residues 56–76 (EVRGGGRKPWRQKGTGRARAG) is disordered. Residues 60–71 (GGRKPWRQKGTG) show a composition bias toward basic residues.

The protein belongs to the universal ribosomal protein uL4 family. As to quaternary structure, part of the 50S ribosomal subunit.

One of the primary rRNA binding proteins, this protein initially binds near the 5'-end of the 23S rRNA. It is important during the early stages of 50S assembly. It makes multiple contacts with different domains of the 23S rRNA in the assembled 50S subunit and ribosome. Its function is as follows. Forms part of the polypeptide exit tunnel. The sequence is that of Large ribosomal subunit protein uL4 from Desulfitobacterium hafniense (strain DSM 10664 / DCB-2).